We begin with the raw amino-acid sequence, 783 residues long: Polyribonucleotide nucleotidyltransferase 1, mitochondrial (783 aa).

Residues 1-45 constitute a mitochondrion transit peptide; that stretch reads MAACRLCCLCPCLRPLGCGPLGRPGRNRALSYLQMRALWSSTGSR. Residues Lys-250, Lys-264, and Lys-285 each carry the N6-acetyllysine modification. Residue Lys-552 is modified to N6-succinyllysine. The KH domain maps to 605 to 664; the sequence is PVVETVKVPLSKRAKFVGPGGYHLKKLQAETGVTISQVDEETFSIFAPTPTAMHEARDFI. Positions 679–750 constitute an S1 motif domain; it reads GAVYTATITE…ADGRMRLSRK (72 aa). Position 754 is a phosphoserine (Ser-754).

It belongs to the polyribonucleotide nucleotidyltransferase family. As to quaternary structure, homotrimer; in free form. Homooligomer. Component of the mitochondrial degradosome (mtEXO) complex which is a heteropentamer containing 2 copies of SUPV3L1 and 3 copies of PNPT1. As part of the mitochondrial degradosome complex, interacts with GRSF1 in an RNA-dependent manner; the interaction enhances the activity of the complex. Interacts with TCL1A; the interaction has no effect on PNPT1 exonuclease activity.

The protein resides in the cytoplasm. Its subcellular location is the mitochondrion matrix. It localises to the mitochondrion intermembrane space. It carries out the reaction RNA(n+1) + phosphate = RNA(n) + a ribonucleoside 5'-diphosphate. Functionally, RNA-binding protein implicated in numerous RNA metabolic processes. Catalyzes the phosphorolysis of single-stranded polyribonucleotides processively in the 3'-to-5' direction. Mitochondrial intermembrane factor with RNA-processing exoribonulease activity. Component of the mitochondrial degradosome (mtEXO) complex, that degrades 3' overhang double-stranded RNA with a 3'-to-5' directionality in an ATP-dependent manner. Involved in the degradation of non-coding mitochondrial transcripts (MT-ncRNA) and tRNA-like molecules. Required for correct processing and polyadenylation of mitochondrial mRNAs. Plays a role as a cytoplasmic RNA import factor that mediates the translocation of small RNA components, like the 5S RNA, the RNA subunit of ribonuclease P and the mitochondrial RNA-processing (MRP) RNA, into the mitochondrial matrix. Plays a role in mitochondrial morphogenesis and respiration; regulates the expression of the electron transport chain (ETC) components at the mRNA and protein levels. In the cytoplasm, shows a 3'-to-5' exoribonuclease mediating mRNA degradation activity; degrades c-myc mRNA upon treatment with IFNB1/IFN-beta, resulting in a growth arrest in melanoma cells. Regulates the stability of specific mature miRNAs in melanoma cells; specifically and selectively degrades miR-221, preferentially. Also plays a role in RNA cell surveillance by cleaning up oxidized RNAs. Binds to the RNA subunit of ribonuclease P, MRP RNA and miR-221 microRNA. This Mus musculus (Mouse) protein is Polyribonucleotide nucleotidyltransferase 1, mitochondrial (Pnpt1).